A 279-amino-acid polypeptide reads, in one-letter code: 1D-myo-inositol 2-acetamido-2-deoxy-alpha-D-glucopyranoside deacetylase (279 aa).

His12, Asp15, and His146 together coordinate Zn(2+).

Belongs to the MshB deacetylase family. It depends on Zn(2+) as a cofactor.

The enzyme catalyses 1D-myo-inositol 2-acetamido-2-deoxy-alpha-D-glucopyranoside + H2O = 1D-myo-inositol 2-amino-2-deoxy-alpha-D-glucopyranoside + acetate. In terms of biological role, catalyzes the deacetylation of 1D-myo-inositol 2-acetamido-2-deoxy-alpha-D-glucopyranoside (GlcNAc-Ins) in the mycothiol biosynthesis pathway. This Mycobacteroides abscessus (strain ATCC 19977 / DSM 44196 / CCUG 20993 / CIP 104536 / JCM 13569 / NCTC 13031 / TMC 1543 / L948) (Mycobacterium abscessus) protein is 1D-myo-inositol 2-acetamido-2-deoxy-alpha-D-glucopyranoside deacetylase.